Reading from the N-terminus, the 274-residue chain is Rhamnulose-1-phosphate aldolase (274 aa).

Glu117 is an active-site residue. The Zn(2+) site is built by His141, His143, and His212.

The protein belongs to the aldolase class II family. RhaD subfamily. As to quaternary structure, homotetramer. It depends on Zn(2+) as a cofactor.

It is found in the cytoplasm. The enzyme catalyses L-rhamnulose 1-phosphate = (S)-lactaldehyde + dihydroxyacetone phosphate. It participates in carbohydrate degradation; L-rhamnose degradation; glycerone phosphate from L-rhamnose: step 3/3. In terms of biological role, catalyzes the reversible cleavage of L-rhamnulose-1-phosphate to dihydroxyacetone phosphate (DHAP) and L-lactaldehyde. The chain is Rhamnulose-1-phosphate aldolase from Yersinia pseudotuberculosis serotype I (strain IP32953).